A 417-amino-acid polypeptide reads, in one-letter code: Putative competence-damage inducible protein (417 aa).

It belongs to the CinA family.

The sequence is that of Putative competence-damage inducible protein from Oceanobacillus iheyensis (strain DSM 14371 / CIP 107618 / JCM 11309 / KCTC 3954 / HTE831).